We begin with the raw amino-acid sequence, 223 residues long: Ribose-5-phosphate isomerase A (223 aa).

Residues 32-35 (TGST), 85-88 (DGAD), and 98-101 (KGGG) contribute to the substrate site. Glu-107 functions as the Proton acceptor in the catalytic mechanism. Position 125 (Lys-125) interacts with substrate.

It belongs to the ribose 5-phosphate isomerase family. Homodimer.

The enzyme catalyses aldehydo-D-ribose 5-phosphate = D-ribulose 5-phosphate. The protein operates within carbohydrate degradation; pentose phosphate pathway; D-ribose 5-phosphate from D-ribulose 5-phosphate (non-oxidative stage): step 1/1. Functionally, catalyzes the reversible conversion of ribose-5-phosphate to ribulose 5-phosphate. This is Ribose-5-phosphate isomerase A from Pseudomonas syringae pv. tomato (strain ATCC BAA-871 / DC3000).